Consider the following 319-residue polypeptide: tRNA-cytidine(32) 2-sulfurtransferase (319 aa).

The PP-loop motif motif lies at serine 43–serine 48. Residues cysteine 118, cysteine 121, and cysteine 209 each coordinate [4Fe-4S] cluster.

The protein belongs to the TtcA family. As to quaternary structure, homodimer. It depends on Mg(2+) as a cofactor. Requires [4Fe-4S] cluster as cofactor.

It is found in the cytoplasm. The enzyme catalyses cytidine(32) in tRNA + S-sulfanyl-L-cysteinyl-[cysteine desulfurase] + AH2 + ATP = 2-thiocytidine(32) in tRNA + L-cysteinyl-[cysteine desulfurase] + A + AMP + diphosphate + H(+). The protein operates within tRNA modification. Functionally, catalyzes the ATP-dependent 2-thiolation of cytidine in position 32 of tRNA, to form 2-thiocytidine (s(2)C32). The sulfur atoms are provided by the cysteine/cysteine desulfurase (IscS) system. The sequence is that of tRNA-cytidine(32) 2-sulfurtransferase from Neisseria meningitidis serogroup C / serotype 2a (strain ATCC 700532 / DSM 15464 / FAM18).